A 264-amino-acid polypeptide reads, in one-letter code: Glutamate 5-kinase (264 aa).

An ATP-binding site is contributed by K15. Substrate contacts are provided by S55, D142, and N154. ATP is bound by residues 174–175 and 216–222; these read SD and TGGIATK.

It belongs to the glutamate 5-kinase family.

Its subcellular location is the cytoplasm. It carries out the reaction L-glutamate + ATP = L-glutamyl 5-phosphate + ADP. The protein operates within amino-acid biosynthesis; L-proline biosynthesis; L-glutamate 5-semialdehyde from L-glutamate: step 1/2. Functionally, catalyzes the transfer of a phosphate group to glutamate to form L-glutamate 5-phosphate. The sequence is that of Glutamate 5-kinase from Alkaliphilus metalliredigens (strain QYMF).